Reading from the N-terminus, the 649-residue chain is Endoplasmic reticulum membrane protein 65 (649 aa).

Residues 1–55 (MGSNTSPGQADPLESENESSLTSRFLPNKRDGGKDNESVIPEKEEPDLNEPVLAV) are disordered. At 1-165 (MGSNTSPGQA…LATPYAIEKT (165 aa)) the chain is on the cytoplasmic side. The span at 28-43 (NKRDGGKDNESVIPEK) shows a compositional bias: basic and acidic residues. Serine 94 is subject to Phosphoserine. Residues 166–186 (FLFGWFVSVDSFLYIFTLFPI) traverse the membrane as a helical segment. Over 187–302 (RVLISFFTLS…NFWNPAGWMT (116 aa)) the chain is Lumenal. N-linked (GlcNAc...) asparagine glycosylation occurs at asparagine 215. A helical transmembrane segment spans residues 303 to 323 (FFYYFAISLAYMVLHTLVLLY). Topologically, residues 324–366 (QIITLNVTVNSYSNAVLALLMSNQLVEIKGAVFKKFEKENLFQ) are cytoplasmic. A helical membrane pass occupies residues 367–387 (LTCSDVVERFQITIMVIIIFL). The Lumenal segment spans residues 388–414 (RNLAELYTTSSLDQPLLTFKRLKTLLA). A helical membrane pass occupies residues 415-435 (PFFWVIGSELFVDWLKHAFII). The Cytoplasmic segment spans residues 436 to 479 (KFNYIKPSIYSRFTDVLCHDYVASGAQLTQTVTGCSQQVARRMG). The chain crosses the membrane as a helical span at residues 480-500 (LPVLPLVCVFIRTSMQTWSMF). At 501–557 (RSTHSMKQEIAKSIGTIFPTKDNYVYYLPNKEANTYNAGKEASWETLLLSVVRGKSG) the chain is on the lumenal side. The chain crosses the membrane as a helical span at residues 558–578 (IAFLFFMAIMLKLLLGKAILA). Residues 579–649 (ITQSRYESMQ…RYAMHSKRIW (71 aa)) lie on the Cytoplasmic side of the membrane.

Belongs to the TAPT1 family. In terms of assembly, interacts with slp1.

It localises to the endoplasmic reticulum membrane. Functionally, may be involved in membrane protein folding. The polypeptide is Endoplasmic reticulum membrane protein 65 (Schizosaccharomyces pombe (strain 972 / ATCC 24843) (Fission yeast)).